Reading from the N-terminus, the 292-residue chain is uncharacterized protein (292 aa).

Residues Thr-43 and Tyr-105 each act as charge relay system in the active site. Tyr-131 serves as the catalytic Proton donor. The Schiff-base intermediate with substrate role is filled by Lys-159.

Belongs to the DapA family. In terms of assembly, homotetramer.

The protein resides in the cytoplasm. This is an uncharacterized protein from Thermococcus kodakarensis (strain ATCC BAA-918 / JCM 12380 / KOD1) (Pyrococcus kodakaraensis (strain KOD1)).